Here is a 463-residue protein sequence, read N- to C-terminus: Major capsid protein (463 aa).

This sequence belongs to the NCLDV major capsid protein family. In terms of assembly, homomultimer.

Its subcellular location is the virion. Major capsid protein that self assembles to form a T=133 or T=147 icosahedral capsid. The polypeptide is Major capsid protein (Dryophytes versicolor (chameleon treefrog)).